An 894-amino-acid polypeptide reads, in one-letter code: Protein translocase subunit SecA (894 aa).

ATP contacts are provided by residues Gln87, 105-109 (GEGKT), and Asp512. A disordered region spans residues 857–894 (FNLGDEPEAQQPVTSKKVGRNEPCPCGSGKKYKQCCGK). 4 residues coordinate Zn(2+): Cys880, Cys882, Cys891, and Cys892.

The protein belongs to the SecA family. Monomer and homodimer. Part of the essential Sec protein translocation apparatus which comprises SecA, SecYEG and auxiliary proteins SecDF-YajC and YidC. Zn(2+) is required as a cofactor.

It localises to the cell inner membrane. The protein resides in the cytoplasm. It catalyses the reaction ATP + H2O + cellular proteinSide 1 = ADP + phosphate + cellular proteinSide 2.. Its function is as follows. Part of the Sec protein translocase complex. Interacts with the SecYEG preprotein conducting channel. Has a central role in coupling the hydrolysis of ATP to the transfer of proteins into and across the cell membrane, serving as an ATP-driven molecular motor driving the stepwise translocation of polypeptide chains across the membrane. The polypeptide is Protein translocase subunit SecA (Geotalea uraniireducens (strain Rf4) (Geobacter uraniireducens)).